The chain runs to 199 residues: Pyridoxal 5'-phosphate synthase subunit PdxT (199 aa).

47 to 49 (GES) is a binding site for L-glutamine. The Nucleophile role is filled by cysteine 79. L-glutamine is bound by residues arginine 106 and 133–134 (IR). Residues histidine 169 and glutamate 171 each act as charge relay system in the active site.

The protein belongs to the glutaminase PdxT/SNO family. In the presence of PdxS, forms a dodecamer of heterodimers. Only shows activity in the heterodimer.

It carries out the reaction aldehydo-D-ribose 5-phosphate + D-glyceraldehyde 3-phosphate + L-glutamine = pyridoxal 5'-phosphate + L-glutamate + phosphate + 3 H2O + H(+). It catalyses the reaction L-glutamine + H2O = L-glutamate + NH4(+). Its pathway is cofactor biosynthesis; pyridoxal 5'-phosphate biosynthesis. Its function is as follows. Catalyzes the hydrolysis of glutamine to glutamate and ammonia as part of the biosynthesis of pyridoxal 5'-phosphate. The resulting ammonia molecule is channeled to the active site of PdxS. This chain is Pyridoxal 5'-phosphate synthase subunit PdxT, found in Desulfitobacterium hafniense (strain Y51).